The primary structure comprises 166 residues: Anterior gradient protein 3 (166 aa).

An N-terminal signal peptide occupies residues 1–21; it reads MMLHSALGLCLLLVTVSSNLA. Residues 163-166 carry the Prevents secretion from ER motif; the sequence is QSEL.

The protein belongs to the AGR family. As to quaternary structure, interacts with LYPD3 and DAG1 (alphaDAG1). In terms of tissue distribution, expressed in the lung, in the ciliated cells of the airway epithelium. Expression increased with differentiation of airway epithelial cells. Not detected in the mucous cells. Expressed in ciliated cells in the oviduct. Also detected in stomach, colon, prostate and liver. Expressed in breast, ovary, prostate and liver cancer. Expression is associated with the level of differentiation of breast cancer (at protein level).

It is found in the endoplasmic reticulum. Functionally, required for calcium-mediated regulation of ciliary beat frequency and mucociliary clearance in the airway. Might be involved in the regulation of intracellular calcium in tracheal epithelial cells. The chain is Anterior gradient protein 3 (AGR3) from Homo sapiens (Human).